Consider the following 443-residue polypeptide: tRNA modification GTPase MnmE (443 aa).

(6S)-5-formyl-5,6,7,8-tetrahydrofolate contacts are provided by R23, E80, and K120. Positions 217–367 (GFEVVILGAP…LLAEIGRRAA (151 aa)) constitute a TrmE-type G domain. GTP-binding positions include 227–232 (NAGKSS), 246–252 (TDEPGTT), and 271–274 (DTAG). Mg(2+) contacts are provided by S231 and T252. A (6S)-5-formyl-5,6,7,8-tetrahydrofolate-binding site is contributed by K443.

Belongs to the TRAFAC class TrmE-Era-EngA-EngB-Septin-like GTPase superfamily. TrmE GTPase family. In terms of assembly, homodimer. Heterotetramer of two MnmE and two MnmG subunits. The cofactor is K(+).

It localises to the cytoplasm. In terms of biological role, exhibits a very high intrinsic GTPase hydrolysis rate. Involved in the addition of a carboxymethylaminomethyl (cmnm) group at the wobble position (U34) of certain tRNAs, forming tRNA-cmnm(5)s(2)U34. In Mesorhizobium japonicum (strain LMG 29417 / CECT 9101 / MAFF 303099) (Mesorhizobium loti (strain MAFF 303099)), this protein is tRNA modification GTPase MnmE.